Reading from the N-terminus, the 440-residue chain is Chromosome partition protein MukF (440 aa).

The leucine-zipper stretch occupies residues Leu208 to Ile236.

The protein belongs to the MukF family. Interacts, and probably forms a ternary complex, with MukE and MukB via its C-terminal region. The complex formation is stimulated by calcium or magnesium. It is required for an interaction between MukE and MukB.

It localises to the cytoplasm. Its subcellular location is the nucleoid. Involved in chromosome condensation, segregation and cell cycle progression. May participate in facilitating chromosome segregation by condensation DNA from both sides of a centrally located replisome during cell division. Not required for mini-F plasmid partitioning. Probably acts via its interaction with MukB and MukE. Overexpression results in anucleate cells. It has a calcium binding activity. The sequence is that of Chromosome partition protein MukF from Escherichia coli (strain ATCC 8739 / DSM 1576 / NBRC 3972 / NCIMB 8545 / WDCM 00012 / Crooks).